Reading from the N-terminus, the 184-residue chain is Large ribosomal subunit protein uL18 (184 aa).

The protein belongs to the universal ribosomal protein uL18 family. In terms of assembly, part of the 50S ribosomal subunit. Contacts the 5S and 23S rRNAs.

Its function is as follows. This is one of the proteins that bind and probably mediate the attachment of the 5S RNA into the large ribosomal subunit, where it forms part of the central protuberance. The sequence is that of Large ribosomal subunit protein uL18 from Haloferax mediterranei (strain ATCC 33500 / DSM 1411 / JCM 8866 / NBRC 14739 / NCIMB 2177 / R-4) (Halobacterium mediterranei).